The primary structure comprises 132 residues: Interleukin-4 (132 aa).

The signal sequence occupies residues 1-24 (MGLTSQLIPTLVCLLALTSTFVHG). N-linked (GlcNAc...) asparagine glycosylation is found at Asn-28, Asn-45, Asn-62, and Asn-101. 2 disulfides stabilise this stretch: Cys-48/Cys-84 and Cys-70/Cys-104.

This sequence belongs to the IL-4/IL-13 family.

It localises to the secreted. In terms of biological role, participates in at least several B-cell activation processes as well as of other cell types. It is a costimulator of DNA-synthesis. It induces the expression of class II MHC molecules on resting B-cells. It enhances both secretion and cell surface expression of IgE and IgG1. It also regulates the expression of the low affinity Fc receptor for IgE (CD23) on both lymphocytes and monocytes. Positively regulates IL31RA expression in macrophages. Stimulates autophagy in dendritic cells by interfering with mTORC1 signaling and through the induction of RUFY4. The chain is Interleukin-4 (IL4) from Ailuropoda melanoleuca (Giant panda).